A 546-amino-acid chain; its full sequence is Chaperonin GroEL 2 (546 aa).

ATP contacts are provided by residues 30 to 33 (TLGP), Lys-51, 87 to 91 (DGTTT), Gly-415, 479 to 481 (NAA), and Asp-495. The disordered stretch occupies residues 524-546 (APKDAPPAAPAGVPGAGGPGFDF). A compositionally biased stretch (gly residues) spans 537–546 (PGAGGPGFDF).

This sequence belongs to the chaperonin (HSP60) family. As to quaternary structure, forms a cylinder of 14 subunits composed of two heptameric rings stacked back-to-back. Interacts with the co-chaperonin GroES.

It is found in the cytoplasm. It catalyses the reaction ATP + H2O + a folded polypeptide = ADP + phosphate + an unfolded polypeptide.. Its function is as follows. Together with its co-chaperonin GroES, plays an essential role in assisting protein folding. The GroEL-GroES system forms a nano-cage that allows encapsulation of the non-native substrate proteins and provides a physical environment optimized to promote and accelerate protein folding. The chain is Chaperonin GroEL 2 from Burkholderia pseudomallei (strain 1710b).